We begin with the raw amino-acid sequence, 214 residues long: NADH-quinone oxidoreductase subunit C (214 aa).

It belongs to the complex I 30 kDa subunit family. As to quaternary structure, NDH-1 is composed of 14 different subunits. Subunits NuoB, C, D, E, F, and G constitute the peripheral sector of the complex.

It is found in the cell inner membrane. The catalysed reaction is a quinone + NADH + 5 H(+)(in) = a quinol + NAD(+) + 4 H(+)(out). In terms of biological role, NDH-1 shuttles electrons from NADH, via FMN and iron-sulfur (Fe-S) centers, to quinones in the respiratory chain. The immediate electron acceptor for the enzyme in this species is believed to be ubiquinone. Couples the redox reaction to proton translocation (for every two electrons transferred, four hydrogen ions are translocated across the cytoplasmic membrane), and thus conserves the redox energy in a proton gradient. The sequence is that of NADH-quinone oxidoreductase subunit C from Francisella tularensis subsp. tularensis (strain WY96-3418).